A 68-amino-acid polypeptide reads, in one-letter code: U19-ctenitoxin-Pn1a (68 aa).

Q1 carries the post-translational modification Pyrrolidone carboxylic acid. Intrachain disulfides connect C8–C19, C13–C28, C18–C51, C38–C59, and C53–C65.

As to expression, expressed by the venom gland.

The protein resides in the secreted. Its function is as follows. Non-toxic to mice and insects. The chain is U19-ctenitoxin-Pn1a from Phoneutria nigriventer (Brazilian armed spider).